A 91-amino-acid polypeptide reads, in one-letter code: Elongation factor 1-beta (91 aa).

It belongs to the EF-1-beta/EF-1-delta family.

Promotes the exchange of GDP for GTP in EF-1-alpha/GDP, thus allowing the regeneration of EF-1-alpha/GTP that could then be used to form the ternary complex EF-1-alpha/GTP/AAtRNA. This is Elongation factor 1-beta from Caldivirga maquilingensis (strain ATCC 700844 / DSM 13496 / JCM 10307 / IC-167).